Here is a 266-residue protein sequence, read N- to C-terminus: Urease accessory protein UreD (266 aa).

This sequence belongs to the UreD family. UreD, UreF and UreG form a complex that acts as a GTP-hydrolysis-dependent molecular chaperone, activating the urease apoprotein by helping to assemble the nickel containing metallocenter of UreC. The UreE protein probably delivers the nickel.

It localises to the cytoplasm. Functionally, required for maturation of urease via the functional incorporation of the urease nickel metallocenter. This chain is Urease accessory protein UreD, found in Jannaschia sp. (strain CCS1).